We begin with the raw amino-acid sequence, 457 residues long: Siroheme synthase 2 (457 aa).

A precorrin-2 dehydrogenase /sirohydrochlorin ferrochelatase region spans residues 1-204 (MDHLPIFCQL…DDRQAVADTT (204 aa)). NAD(+) contacts are provided by residues 22 to 23 (DV) and 43 to 44 (LD). The residue at position 128 (serine 128) is a Phosphoserine. Residues 216–457 (GEVVLVGAGP…RDKLNWFSNH (242 aa)) are uroporphyrinogen-III C-methyltransferase. Position 225 (proline 225) interacts with S-adenosyl-L-methionine. Aspartate 248 (proton acceptor) is an active-site residue. The Proton donor role is filled by lysine 270. S-adenosyl-L-methionine contacts are provided by residues 301 to 303 (GGD), isoleucine 306, 331 to 332 (TA), methionine 382, and glycine 411.

The protein in the N-terminal section; belongs to the precorrin-2 dehydrogenase / sirohydrochlorin ferrochelatase family. This sequence in the C-terminal section; belongs to the precorrin methyltransferase family.

The catalysed reaction is uroporphyrinogen III + 2 S-adenosyl-L-methionine = precorrin-2 + 2 S-adenosyl-L-homocysteine + H(+). It catalyses the reaction precorrin-2 + NAD(+) = sirohydrochlorin + NADH + 2 H(+). It carries out the reaction siroheme + 2 H(+) = sirohydrochlorin + Fe(2+). Its pathway is cofactor biosynthesis; adenosylcobalamin biosynthesis; precorrin-2 from uroporphyrinogen III: step 1/1. It functions in the pathway cofactor biosynthesis; adenosylcobalamin biosynthesis; sirohydrochlorin from precorrin-2: step 1/1. It participates in porphyrin-containing compound metabolism; siroheme biosynthesis; precorrin-2 from uroporphyrinogen III: step 1/1. The protein operates within porphyrin-containing compound metabolism; siroheme biosynthesis; siroheme from sirohydrochlorin: step 1/1. Its pathway is porphyrin-containing compound metabolism; siroheme biosynthesis; sirohydrochlorin from precorrin-2: step 1/1. In terms of biological role, multifunctional enzyme that catalyzes the SAM-dependent methylations of uroporphyrinogen III at position C-2 and C-7 to form precorrin-2 via precorrin-1. Then it catalyzes the NAD-dependent ring dehydrogenation of precorrin-2 to yield sirohydrochlorin. Finally, it catalyzes the ferrochelation of sirohydrochlorin to yield siroheme. This chain is Siroheme synthase 2, found in Klebsiella pneumoniae subsp. pneumoniae (strain ATCC 700721 / MGH 78578).